The sequence spans 297 residues: Phosphoribosylaminoimidazole-succinocarboxamide synthase (297 aa).

The protein belongs to the SAICAR synthetase family.

It catalyses the reaction 5-amino-1-(5-phospho-D-ribosyl)imidazole-4-carboxylate + L-aspartate + ATP = (2S)-2-[5-amino-1-(5-phospho-beta-D-ribosyl)imidazole-4-carboxamido]succinate + ADP + phosphate + 2 H(+). Its pathway is purine metabolism; IMP biosynthesis via de novo pathway; 5-amino-1-(5-phospho-D-ribosyl)imidazole-4-carboxamide from 5-amino-1-(5-phospho-D-ribosyl)imidazole-4-carboxylate: step 1/2. This chain is Phosphoribosylaminoimidazole-succinocarboxamide synthase, found in Methylobacillus flagellatus (strain ATCC 51484 / DSM 6875 / VKM B-1610 / KT).